A 344-amino-acid chain; its full sequence is Selenide, water dikinase (344 aa).

The active site involves Cys16. ATP-binding positions include Lys19 and 47–49 (SRD). Asp50 contacts Mg(2+). ATP-binding positions include Asp67, Asp90, and 138–140 (GHS). Asp90 is a binding site for Mg(2+). Asp226 is a Mg(2+) binding site.

It belongs to the selenophosphate synthase 1 family. Class I subfamily. As to quaternary structure, homodimer. Requires Mg(2+) as cofactor.

The catalysed reaction is hydrogenselenide + ATP + H2O = selenophosphate + AMP + phosphate + 2 H(+). Its function is as follows. Synthesizes selenophosphate from selenide and ATP. This chain is Selenide, water dikinase, found in Bordetella bronchiseptica (strain ATCC BAA-588 / NCTC 13252 / RB50) (Alcaligenes bronchisepticus).